The primary structure comprises 607 residues: Replication factor C large subunit (607 aa).

55–62 (GPAGIGKT) provides a ligand contact to ATP. The disordered stretch occupies residues 468 to 607 (EEEKPQKEGS…PKNQKTLFDF (140 aa)). Basic and acidic residues predominate over residues 506–518 (TSEKKENSEKKEN). A compositionally biased stretch (polar residues) spans 548 to 558 (SESVEQKTSSK).

Belongs to the activator 1 small subunits family. RfcL subfamily. Heteromultimer composed of small subunits (RfcS) and large subunits (RfcL).

In terms of biological role, part of the RFC clamp loader complex which loads the PCNA sliding clamp onto DNA. The protein is Replication factor C large subunit of Methanosarcina acetivorans (strain ATCC 35395 / DSM 2834 / JCM 12185 / C2A).